A 942-amino-acid polypeptide reads, in one-letter code: Calcium-activated chloride channel regulator 2 (942 aa).

The first 32 residues, 1–32 (MTHRDSTGPVIGLKLVTLLFTLSPELLFLGAG), serve as a signal peptide directing secretion. The Extracellular portion of the chain corresponds to 33 to 905 (LKLKENGYDG…SRDDLILKGV (873 aa)). Residues 54–205 (DLKLITNIKE…CSSDITGVFV (152 aa)) form a metalloprotease domain region. N-linked (GlcNAc...) asparagine glycans are attached at residues N74 and N97. A Zn(2+)-binding site is contributed by H164. The active site involves E165. Zn(2+)-binding residues include H168 and D175. 4 N-linked (GlcNAc...) asparagine glycosylation sites follow: N231, N235, N254, and N286. Positions 311-483 (VVCLVIDVSR…NGMTEAFVRI (173 aa)) constitute a VWFA domain. N522, N580, N637, and N821 each carry an N-linked (GlcNAc...) asparagine glycan. Residues 906 to 926 (LTTVGLIAILCLIMVVAHCIF) form a helical membrane-spanning segment. Residues 927-942 (NRKKRPSRKENETKFL) lie on the Cytoplasmic side of the membrane.

It belongs to the CLCR family. Post-translationally, the translation product is autoproteolytically cleaved by the metalloprotease domain in the endoplasmic reticulum into a N-terminal and a C-terminal products that remain physically associated with each other. The cleavage is necessary for calcium-activated chloride channel (CaCC) activation activity. N-glycosylated. As to expression, highly expressed in eye, spleen, lung, kidney, uterus, and endothelial cells. Weakly expressed in heart and throughout the gastrointestinal tract. Highly expressed in mammary cell lines. Its expression in immortalized cell line HC11 correlates with slow or arrested growth. Re-expression in mammary tumor cells reduces colony survival.

It localises to the cell membrane. The protein resides in the basal cell membrane. The protein localises to the cell junction. In terms of biological role, plays a role in modulating chloride current across the plasma membrane in a calcium-dependent manner, and cell adhesion. Involved in basal cell adhesion and/or stratification of squamous epithelia. May act as a tumor suppressor in breast and colorectal cancer. Plays a key role for cell adhesion in the beginning stages of lung metastasis via the binding to ITGB4. The protein is Calcium-activated chloride channel regulator 2 (Clca2) of Mus musculus (Mouse).